The primary structure comprises 149 residues: D-aminoacyl-tRNA deacylase (149 aa).

The Gly-cisPro motif, important for rejection of L-amino acids signature appears at 137–138 (GP).

This sequence belongs to the DTD family. As to quaternary structure, homodimer.

It is found in the cytoplasm. It carries out the reaction glycyl-tRNA(Ala) + H2O = tRNA(Ala) + glycine + H(+). The enzyme catalyses a D-aminoacyl-tRNA + H2O = a tRNA + a D-alpha-amino acid + H(+). An aminoacyl-tRNA editing enzyme that deacylates mischarged D-aminoacyl-tRNAs. Also deacylates mischarged glycyl-tRNA(Ala), protecting cells against glycine mischarging by AlaRS. Acts via tRNA-based rather than protein-based catalysis; rejects L-amino acids rather than detecting D-amino acids in the active site. By recycling D-aminoacyl-tRNA to D-amino acids and free tRNA molecules, this enzyme counteracts the toxicity associated with the formation of D-aminoacyl-tRNA entities in vivo and helps enforce protein L-homochirality. This chain is D-aminoacyl-tRNA deacylase, found in Syntrophus aciditrophicus (strain SB).